The primary structure comprises 188 residues: Nicotinamide-nucleotide adenylyltransferase (188 aa).

Belongs to the archaeal NMN adenylyltransferase family.

Its subcellular location is the cytoplasm. The enzyme catalyses beta-nicotinamide D-ribonucleotide + ATP + H(+) = diphosphate + NAD(+). It participates in cofactor biosynthesis; NAD(+) biosynthesis; NAD(+) from nicotinamide D-ribonucleotide: step 1/1. The polypeptide is Nicotinamide-nucleotide adenylyltransferase (Thermococcus kodakarensis (strain ATCC BAA-918 / JCM 12380 / KOD1) (Pyrococcus kodakaraensis (strain KOD1))).